The chain runs to 293 residues: Diaminopimelate epimerase (293 aa).

Residues asparagine 17, glutamine 47, and asparagine 67 each coordinate substrate. The Proton donor role is filled by cysteine 76. Substrate is bound by residues 77 to 78 (GN), asparagine 164, asparagine 197, and 215 to 216 (ER). Residue cysteine 224 is the Proton acceptor of the active site. 225 to 226 (GS) is a substrate binding site.

It belongs to the diaminopimelate epimerase family. As to quaternary structure, homodimer.

The protein resides in the cytoplasm. The enzyme catalyses (2S,6S)-2,6-diaminopimelate = meso-2,6-diaminopimelate. The protein operates within amino-acid biosynthesis; L-lysine biosynthesis via DAP pathway; DL-2,6-diaminopimelate from LL-2,6-diaminopimelate: step 1/1. In terms of biological role, catalyzes the stereoinversion of LL-2,6-diaminopimelate (L,L-DAP) to meso-diaminopimelate (meso-DAP), a precursor of L-lysine and an essential component of the bacterial peptidoglycan. The chain is Diaminopimelate epimerase from Rhodopseudomonas palustris (strain HaA2).